A 361-amino-acid polypeptide reads, in one-letter code: Phospho-N-acetylmuramoyl-pentapeptide-transferase (361 aa).

Transmembrane regions (helical) follow at residues 25–45 (RGILAALTALFLSLWMGPAVI), 73–93 (TMGGSLILLTVTLSVLLWGDL), 98–118 (VWLVLAVMICFGAIGWYDDWI), 139–159 (IFGLAAGLFLYYTADVPAAIT), 168–188 (IALPLAGVSFVVIAYFWIVGF), 200–220 (GLAIMPTVLVACALGVFAYAS), 237–257 (AGELIIICSAIAGAGLGFLWF), 264–284 (VFMGDIGALSLGAVLGTVAVI), 289–309 (LVLVIMGGVFVIETLSVMIQV), and 339–359 (VIVRFWIISVVLVLIGLATLK).

This sequence belongs to the glycosyltransferase 4 family. MraY subfamily. Requires Mg(2+) as cofactor.

It is found in the cell inner membrane. It carries out the reaction UDP-N-acetyl-alpha-D-muramoyl-L-alanyl-gamma-D-glutamyl-meso-2,6-diaminopimeloyl-D-alanyl-D-alanine + di-trans,octa-cis-undecaprenyl phosphate = di-trans,octa-cis-undecaprenyl diphospho-N-acetyl-alpha-D-muramoyl-L-alanyl-D-glutamyl-meso-2,6-diaminopimeloyl-D-alanyl-D-alanine + UMP. The protein operates within cell wall biogenesis; peptidoglycan biosynthesis. Catalyzes the initial step of the lipid cycle reactions in the biosynthesis of the cell wall peptidoglycan: transfers peptidoglycan precursor phospho-MurNAc-pentapeptide from UDP-MurNAc-pentapeptide onto the lipid carrier undecaprenyl phosphate, yielding undecaprenyl-pyrophosphoryl-MurNAc-pentapeptide, known as lipid I. The polypeptide is Phospho-N-acetylmuramoyl-pentapeptide-transferase (Xanthomonas campestris pv. campestris (strain 8004)).